We begin with the raw amino-acid sequence, 277 residues long: NAD kinase (277 aa).

The active-site Proton acceptor is D67. Residues 67 to 68 (DG), R72, 137 to 138 (NE), K148, R165, D167, 178 to 183 (TGYAMS), L202, and Q236 each bind NAD(+).

It belongs to the NAD kinase family. It depends on a divalent metal cation as a cofactor.

It localises to the cytoplasm. It carries out the reaction NAD(+) + ATP = ADP + NADP(+) + H(+). Its function is as follows. Involved in the regulation of the intracellular balance of NAD and NADP, and is a key enzyme in the biosynthesis of NADP. Catalyzes specifically the phosphorylation on 2'-hydroxyl of the adenosine moiety of NAD to yield NADP. The protein is NAD kinase of Pyrococcus furiosus (strain ATCC 43587 / DSM 3638 / JCM 8422 / Vc1).